Reading from the N-terminus, the 141-residue chain is Hemoglobin subunit alpha-A/Q/R/T (141 aa).

The Globin domain occupies 1-141; the sequence is VLSPADKTNV…VSTVLTSKYR (141 aa). S3 carries the phosphoserine modification. K7 is subject to N6-succinyllysine. T8 carries the post-translational modification Phosphothreonine. K11 bears the N6-succinyllysine mark. K16 bears the N6-acetyllysine; alternate mark. K16 is modified (N6-succinyllysine; alternate). A Phosphotyrosine modification is found at Y24. Residue S35 is modified to Phosphoserine. Residue K40 is modified to N6-succinyllysine. Phosphoserine is present on S49. Residue H58 coordinates O2. Position 87 (H87) interacts with heme b. Position 102 is a phosphoserine (S102). Phosphothreonine is present on T108. Phosphoserine is present on residues S124 and S131. A phosphothreonine mark is found at T134 and T137. Position 138 is a phosphoserine (S138).

It belongs to the globin family. Heterotetramer of two alpha chains and two beta chains. Red blood cells.

Functionally, involved in oxygen transport from the lung to the various peripheral tissues. The protein is Hemoglobin subunit alpha-A/Q/R/T of Macaca fascicularis (Crab-eating macaque).